Here is a 504-residue protein sequence, read N- to C-terminus: Endosomal/lysosomal proton channel TMEM175 (504 aa).

The tract at residues 1–27 (MSQPRTPEQALDTPGDCPPGRRDEDAG) is disordered. Topologically, residues 1–33 (MSQPRTPEQALDTPGDCPPGRRDEDAGEGIQCS) are cytoplasmic. Position 6 is a phosphothreonine (Thr-6). The helical transmembrane segment at 34–56 (QRMLSFSDALLSIIATVMILPVT) threads the bilayer. A RxxxFSD motif 1 motif is present at residues 35–41 (RMLSFSD). Over 57 to 77 (HTEISPEQQFDRSVQRLLATR) the chain is Lumenal. The interval 58 to 63 (TEISPE) is short helix H1-1. The short helix H2-1 stretch occupies residues 65-71 (QFDRSVQ). Residues 78 to 100 (IAVYLMTFLIVTVAWAAHTRLFQ) form a helical membrane-spanning segment. Residues 101-106 (VVGKTD) lie on the Cytoplasmic side of the membrane. The chain crosses the membrane as a helical span at residues 107-128 (DTLALLNLACMMTITFLPYTFS). Topologically, residues 129–138 (LMVTFPDVPL) are lumenal. The helical transmembrane segment at 139–160 (GIFLFCVCVIAIGVVQALIVGY) threads the bilayer. Residues 161–184 (AFHFPHLLSPQIQRSAHRALYRRH) lie on the Cytoplasmic side of the membrane. Residues 185–205 (VLGIVLQGPALCFAAAIFSLF) traverse the membrane as a helical segment. The Lumenal portion of the chain corresponds to 206 to 210 (FVPLS). A helical transmembrane segment spans residues 211–230 (YLLMVTVILLPYVSKVTGWC). The Cytoplasmic portion of the chain corresponds to 231-257 (RDRLLGHREPSAHPVEVFSFDLHEPLS). A helical transmembrane segment spans residues 258 to 282 (KERVEAFSDGVYAIVATLLILDICE). Positions 260-266 (RVEAFSD) match the RxxxFSD motif 2 motif. Residues 283 to 309 (DNVPDPKDVKERFSGSLVAALSATGPR) are Lumenal-facing. The tract at residues 288 to 296 (PKDVKERFS) is short helix H1-2. Positions 298-304 (SLVAALS) are short helix H2-2. A helical transmembrane segment spans residues 310 to 332 (FLAYFGSFATVGLLWFAHHSLFL). Over 333–338 (HVRKAT) the chain is Cytoplasmic. A helical membrane pass occupies residues 339–360 (RAMGLLNTLSLAFVGGLPLAYQ). The Lumenal segment spans residues 361 to 375 (QTSAFARQPRDELER). A helical transmembrane segment spans residues 376 to 396 (VRVSCTIIFLASIFQLAMWTT). Over 397-416 (ALLHQAETLQPSVWFGGREH) the chain is Cytoplasmic. The chain crosses the membrane as a helical span at residues 417 to 440 (VLMFAKLALYPCASLLAFASTCLL). The Lumenal segment spans residues 441-442 (SR). A helical membrane pass occupies residues 443 to 469 (FSVGIFHLMQIAVPCAFLLLRLLVGLA). Residues 470–504 (LATLRVLRGLARPEHPPPAPTGQDDPQSQLLPAPC) are Cytoplasmic-facing. Residues 483–504 (EHPPPAPTGQDDPQSQLLPAPC) form a disordered region. A compositionally biased stretch (polar residues) spans 493 to 504 (DDPQSQLLPAPC).

It belongs to the TMEM175 family. In terms of assembly, homodimer. Interacts with AKT (AKT1, AKT2 or AKT3); leading to formation of the lysoK(GF) complex, which activates the channel. Interacts with LAMP1; inhibiting the proton channel activity of TMEM175. Interacts with LAMP2; inhibiting the proton channel activity of TMEM175. As to expression, widely expressed.

The protein resides in the endosome membrane. Its subcellular location is the lysosome membrane. The enzyme catalyses H(+)(in) = H(+)(out). It catalyses the reaction K(+)(in) = K(+)(out). Its activity is regulated as follows. Active at low pH (under pH 4.6): proton channel activity is activated by luminal side protons. Polyunsaturated fatty acids, such as arachidonic acid, also activate the channel activity. Proton channel activity is directly inhibited by LAMP1 or LAMP2, facilitating lysosomal acidification. Channel activity is activated following interaction with AKT (AKT1, AKT2 or AKT3): interaction promotes activation from closed to an open state. Activation by AKT is independent of AKT serine/threonine-protein kinase activity. Functionally, proton-activated proton channel that catalyzes proton efflux from endosomes and lysosomes to maintain a steady-state pH. Activated at low pH (under pH 4.6) by luminal side protons: selectively mediates lysosomal proton release from lysosomes, eliciting a proton leak that balances V-ATPase activity to maintain pH homeostasis. Regulation of lumenal pH stability is required for autophagosome-lysosome fusion. Also acts as a potassium channel at higher pH, regulating potassium conductance in endosomes and lysosomes. Constitutes the pore-forming subunit of the lysoK(GF) complex, a complex activated by extracellular growth factors. The lysoK(GF) complex is composed of TMEM175 and AKT (AKT1, AKT2 or AKT3), a major target of growth factor receptors: in the complex, TMEM175 channel is opened by conformational changes by AKT, leading to its activation. The lysoK(GF) complex is required to protect neurons against stress-induced damage. The sequence is that of Endosomal/lysosomal proton channel TMEM175 from Homo sapiens (Human).